Here is a 706-residue protein sequence, read N- to C-terminus: ATP-dependent DNA helicase HMI1, mitochondrial (706 aa).

Residues 5-277 (TPSQWKVINK…LKLFDNFRST (273 aa)) form the UvrD-like helicase ATP-binding domain. ATP contacts are provided by residues 29-34 (GSGKTL) and arginine 275. The region spanning 278-593 (PEIISLASKI…KLSTIHSAKG (316 aa)) is the UvrD-like helicase C-terminal domain. The propeptide at 693 to 706 (YSSLRGCKSVFRRI) is cleaved upon import into mitochondrion.

Belongs to the helicase family. UvrD subfamily. Requires Mg(2+) as cofactor.

It localises to the mitochondrion inner membrane. The enzyme catalyses Couples ATP hydrolysis with the unwinding of duplex DNA by translocating in the 3'-5' direction.. The catalysed reaction is ATP + H2O = ADP + phosphate + H(+). Its function is as follows. Required for mitochondrial genome maintenance and mitochondrial DNA inheritance. The polypeptide is ATP-dependent DNA helicase HMI1, mitochondrial (HMI1) (Saccharomyces cerevisiae (strain ATCC 204508 / S288c) (Baker's yeast)).